We begin with the raw amino-acid sequence, 374 residues long: Chaperone protein DnaJ (374 aa).

In terms of domain architecture, J spans 5-70 (DYYEVLGLEK…DKKANYDRFG (66 aa)). The CR-type zinc-finger motif lies at 137 to 219 (GVEKSINITR…CHGAGHVRKK (83 aa)). Zn(2+) is bound by residues C150, C153, C167, C170, C193, C196, C207, and C210. CXXCXGXG motif repeat units lie at residues 150–157 (CETCGGTG), 167–174 (CDKCGGTG), 193–200 (CDKCGGRG), and 207–214 (CHECHGAG).

The protein belongs to the DnaJ family. In terms of assembly, homodimer. Zn(2+) is required as a cofactor.

It is found in the cytoplasm. Functionally, participates actively in the response to hyperosmotic and heat shock by preventing the aggregation of stress-denatured proteins and by disaggregating proteins, also in an autonomous, DnaK-independent fashion. Unfolded proteins bind initially to DnaJ; upon interaction with the DnaJ-bound protein, DnaK hydrolyzes its bound ATP, resulting in the formation of a stable complex. GrpE releases ADP from DnaK; ATP binding to DnaK triggers the release of the substrate protein, thus completing the reaction cycle. Several rounds of ATP-dependent interactions between DnaJ, DnaK and GrpE are required for fully efficient folding. Also involved, together with DnaK and GrpE, in the DNA replication of plasmids through activation of initiation proteins. This is Chaperone protein DnaJ from Clostridium acetobutylicum (strain ATCC 824 / DSM 792 / JCM 1419 / IAM 19013 / LMG 5710 / NBRC 13948 / NRRL B-527 / VKM B-1787 / 2291 / W).